The primary structure comprises 258 residues: Tryptophan synthase alpha chain (258 aa).

Catalysis depends on proton acceptor residues E50 and D61.

This sequence belongs to the TrpA family. Tetramer of two alpha and two beta chains.

It catalyses the reaction (1S,2R)-1-C-(indol-3-yl)glycerol 3-phosphate + L-serine = D-glyceraldehyde 3-phosphate + L-tryptophan + H2O. The protein operates within amino-acid biosynthesis; L-tryptophan biosynthesis; L-tryptophan from chorismate: step 5/5. Functionally, the alpha subunit is responsible for the aldol cleavage of indoleglycerol phosphate to indole and glyceraldehyde 3-phosphate. The chain is Tryptophan synthase alpha chain from Clostridium beijerinckii (strain ATCC 51743 / NCIMB 8052) (Clostridium acetobutylicum).